The chain runs to 213 residues: Adenylate kinase (213 aa).

An ATP-binding site is contributed by 10–15 (GAGKGT). An NMP region spans residues 30 to 59 (AVGDIFRTIIKTSTSEAELINNYVKQGALI). Residues arginine 36, 57–59 (ALI), 85–88 (GYPR), and glutamine 92 each bind AMP. The interval 123–161 (GRYSCKNCGKIYNIHFLQPKIEHVCDVCSSSVFDYRKDD) is LID. Residue arginine 124 coordinates ATP. Zn(2+) is bound by residues cysteine 127 and cysteine 130. 133–134 (IY) is an ATP binding site. Zn(2+) is bound by residues cysteine 147 and cysteine 150. Arginine 158 and arginine 169 together coordinate AMP. Lysine 197 provides a ligand contact to ATP.

This sequence belongs to the adenylate kinase family. Monomer.

The protein resides in the cytoplasm. The enzyme catalyses AMP + ATP = 2 ADP. It functions in the pathway purine metabolism; AMP biosynthesis via salvage pathway; AMP from ADP: step 1/1. Catalyzes the reversible transfer of the terminal phosphate group between ATP and AMP. Plays an important role in cellular energy homeostasis and in adenine nucleotide metabolism. The sequence is that of Adenylate kinase from Rickettsia prowazekii (strain Madrid E).